A 79-amino-acid polypeptide reads, in one-letter code: UPF0180 protein BCG9842_B3897 (79 aa).

It belongs to the UPF0180 family.

The protein is UPF0180 protein BCG9842_B3897 of Bacillus cereus (strain G9842).